Here is a 775-residue protein sequence, read N- to C-terminus: Semaphorin-3E (775 aa).

Residues 1-25 (MASAGHIITLLLWGYLLELWTGGHT) form the signal peptide. Positions 32-516 (RLRLSHKELL…SASAVAQVRF (485 aa)) constitute a Sema domain. Residue asparagine 44 is glycosylated (N-linked (GlcNAc...) asparagine). A disulfide bridge connects residues cysteine 105 and cysteine 115. Residue asparagine 126 is glycosylated (N-linked (GlcNAc...) asparagine). 4 cysteine pairs are disulfide-bonded: cysteine 133–cysteine 142, cysteine 270–cysteine 382, cysteine 294–cysteine 342, and cysteine 519–cysteine 537. Asparagine 330 carries an N-linked (GlcNAc...) asparagine glycan. One can recognise an Ig-like C2-type domain in the interval 581 to 669 (ALDKTEEHLA…SFVHTVRKIT (89 aa)). N-linked (GlcNAc...) asparagine glycans are attached at residues asparagine 595 and asparagine 596. A disulfide bridge links cysteine 654 with cysteine 729. The interval 742–775 (LKMSPSKWKYANPQEKKLRSKPEHYRLPRHTLDS) is disordered. Basic and acidic residues predominate over residues 755–775 (QEKKLRSKPEHYRLPRHTLDS).

It belongs to the semaphorin family. In terms of assembly, interacts with PLXND1.

The protein localises to the secreted. In terms of biological role, plays an important role in signaling via the cell surface receptor PLXND1. Mediates reorganization of the actin cytoskeleton, leading to the retraction of cell projections. Promotes focal adhesion disassembly and inhibits adhesion of endothelial cells to the extracellular matrix. Regulates angiogenesis, both during embryogenesis and after birth. Can down-regulate sprouting angiogenesis. Required for normal vascular patterning during embryogenesis. Plays an important role in ensuring the specificity of synapse formation. The protein is Semaphorin-3E (SEMA3E) of Homo sapiens (Human).